The following is a 233-amino-acid chain: Phosphonates import ATP-binding protein PhnC 1 (233 aa).

The ABC transporter domain maps to 2-227; it reads LSVSGLTKRY…PAAALDREDI (226 aa). Residue 34-41 participates in ATP binding; that stretch reads GRSGAGKT.

This sequence belongs to the ABC transporter superfamily. Phosphonates importer (TC 3.A.1.9.1) family. In terms of assembly, the complex is composed of two ATP-binding proteins (PhnC), two transmembrane proteins (PhnE) and a solute-binding protein (PhnD).

It localises to the cell membrane. The catalysed reaction is phosphonate(out) + ATP + H2O = phosphonate(in) + ADP + phosphate + H(+). In terms of biological role, part of the ABC transporter complex PhnCDE involved in phosphonates import. Responsible for energy coupling to the transport system. The protein is Phosphonates import ATP-binding protein PhnC 1 of Natronomonas pharaonis (strain ATCC 35678 / DSM 2160 / CIP 103997 / JCM 8858 / NBRC 14720 / NCIMB 2260 / Gabara) (Halobacterium pharaonis).